Consider the following 218-residue polypeptide: Octanoyltransferase (218 aa).

Residues 30 to 217 (GEAGELVWLV…SFARNFPPLA (188 aa)) enclose the BPL/LPL catalytic domain. Substrate-binding positions include 68 to 75 (RGGQYTYH), 148 to 150 (AIG), and 161 to 163 (GIA). The active-site Acyl-thioester intermediate is Cys-179.

It belongs to the LipB family.

The protein localises to the cytoplasm. The enzyme catalyses octanoyl-[ACP] + L-lysyl-[protein] = N(6)-octanoyl-L-lysyl-[protein] + holo-[ACP] + H(+). It functions in the pathway protein modification; protein lipoylation via endogenous pathway; protein N(6)-(lipoyl)lysine from octanoyl-[acyl-carrier-protein]: step 1/2. Catalyzes the transfer of endogenously produced octanoic acid from octanoyl-acyl-carrier-protein onto the lipoyl domains of lipoate-dependent enzymes. Lipoyl-ACP can also act as a substrate although octanoyl-ACP is likely to be the physiological substrate. The chain is Octanoyltransferase from Paracoccus denitrificans (strain Pd 1222).